Consider the following 111-residue polypeptide: Ribonuclease P protein component (111 aa).

This sequence belongs to the RnpA family. As to quaternary structure, consists of a catalytic RNA component (M1 or rnpB) and a protein subunit.

The enzyme catalyses Endonucleolytic cleavage of RNA, removing 5'-extranucleotides from tRNA precursor.. RNaseP catalyzes the removal of the 5'-leader sequence from pre-tRNA to produce the mature 5'-terminus. It can also cleave other RNA substrates such as 4.5S RNA. The protein component plays an auxiliary but essential role in vivo by binding to the 5'-leader sequence and broadening the substrate specificity of the ribozyme. This Clostridium botulinum (strain 657 / Type Ba4) protein is Ribonuclease P protein component.